A 251-amino-acid chain; its full sequence is Large ribosomal subunit protein uL16m (251 aa).

The N-terminal 29 residues, 1-29 (MWRLLSGARAPVLRATLSDSWAAPPARAG), are a transit peptide targeting the mitochondrion.

It belongs to the universal ribosomal protein uL16 family. In terms of assembly, component of the mitochondrial ribosome large subunit (39S) which comprises a 16S rRNA and about 50 distinct proteins.

It localises to the mitochondrion. The polypeptide is Large ribosomal subunit protein uL16m (MRPL16) (Bos taurus (Bovine)).